Reading from the N-terminus, the 93-residue chain is Alpha-defensin 16 (93 aa).

Positions 1–19 are cleaved as a signal peptide; sequence MKTLILLSALVLLAFQVQA. A propeptide spanning residues 20–58 is cleaved from the precursor; that stretch reads DPIQNTDEETKTEEQPGEEDQAVSVSFGDPEGTSLQEES. The interval 22-54 is disordered; sequence IQNTDEETKTEEQPGEEDQAVSVSFGDPEGTSL. 3 disulfide bridges follow: C64/C92, C66/C81, and C71/C91.

This sequence belongs to the alpha-defensin family. As to expression, paneth cells of the small bowel.

It localises to the secreted. Probably contributes to the antimicrobial barrier function of the small bowel mucosa. This chain is Alpha-defensin 16 (Defa16), found in Mus musculus (Mouse).